Consider the following 341-residue polypeptide: S-adenosylmethionine:tRNA ribosyltransferase-isomerase (341 aa).

It belongs to the QueA family. Monomer.

The protein localises to the cytoplasm. It carries out the reaction 7-aminomethyl-7-carbaguanosine(34) in tRNA + S-adenosyl-L-methionine = epoxyqueuosine(34) in tRNA + adenine + L-methionine + 2 H(+). The protein operates within tRNA modification; tRNA-queuosine biosynthesis. Functionally, transfers and isomerizes the ribose moiety from AdoMet to the 7-aminomethyl group of 7-deazaguanine (preQ1-tRNA) to give epoxyqueuosine (oQ-tRNA). The protein is S-adenosylmethionine:tRNA ribosyltransferase-isomerase of Halothermothrix orenii (strain H 168 / OCM 544 / DSM 9562).